A 193-amino-acid polypeptide reads, in one-letter code: Penicillin-binding protein activator LpoB (193 aa).

The N-terminal stretch at 1-16 (MKKYLGVILAALVLTG) is a signal peptide. C17 carries the N-palmitoyl cysteine lipid modification. The S-diacylglycerol cysteine moiety is linked to residue C17. Positions 17–55 (CPSRPPEPTEPPATIEPVEPQVPTTPTLPPGESVPQPPK) are disordered. Residues 28-41 (PATIEPVEPQVPTT) are compositionally biased toward low complexity.

This sequence belongs to the LpoB family. Interacts with PBP1b.

The protein resides in the cell outer membrane. In terms of biological role, regulator of peptidoglycan synthesis that is essential for the function of penicillin-binding protein 1B (PBP1b). The chain is Penicillin-binding protein activator LpoB from Pectobacterium carotovorum subsp. carotovorum (strain PC1).